A 138-amino-acid chain; its full sequence is Transcription factor Atoh7-a (138 aa).

The 53-residue stretch at 33–85 (KRRLAANARERRRMQGLNTAFDSLRKVVPQWGEDKQLSKYETLQMALSYIMAL) folds into the bHLH domain.

It localises to the nucleus. It is found in the perikaryon. Its subcellular location is the cell projection. The protein resides in the axon. Transcription factor that binds to DNA at the consensus sequence 5'-CAG[GC]TG-3'. Positively regulates the determination of retinal ganglion cell fate and formation of the optic nerve and retino-hypothalamic tract. Required for retinal circadian rhythm photoentrainment. Plays a role in brainstem auditory signaling and binaural processing. Regulates the differentiation of olfactory receptor neurons. During retinal neurogenesis, activates the transcription of several genes such as brn3d, coe3, cbfa2t2, glis2, elrC and xgadd45-gamma. The chain is Transcription factor Atoh7-a from Xenopus laevis (African clawed frog).